The sequence spans 121 residues: Large ribosomal subunit protein bL17 (121 aa).

Belongs to the bacterial ribosomal protein bL17 family. Part of the 50S ribosomal subunit. Contacts protein L32.

In Sulfurihydrogenibium sp. (strain YO3AOP1), this protein is Large ribosomal subunit protein bL17.